The sequence spans 554 residues: Sesquiterpene synthase 14b (554 aa).

Residues Asp305, Asp309, Asp449, and Glu457 each contribute to the Mg(2+) site. Positions 305–309 (DDLYD) match the DDXXD motif motif.

Belongs to the terpene synthase family. Tpsa subfamily. The cofactor is Mg(2+). Mn(2+) is required as a cofactor.

The catalysed reaction is (2E,6E)-farnesyl diphosphate = (E)-gamma-bisabolene + diphosphate. The enzyme catalyses (2Z,6Z)-farnesyl diphosphate = (E)-gamma-bisabolene + diphosphate. It carries out the reaction (2Z,6Z)-farnesyl diphosphate = (E)-alpha-bisabolene + diphosphate. It catalyses the reaction (2Z,6Z)-farnesyl diphosphate = (Z)-beta-farnesene + diphosphate. The catalysed reaction is (2E,6E)-farnesyl diphosphate = (E)-beta-farnesene + diphosphate. The enzyme catalyses (2E,6E)-farnesyl diphosphate = (+)-thujopsene + diphosphate. It carries out the reaction (2Z,6Z)-farnesyl diphosphate = (E)-beta-farnesene + diphosphate. It catalyses the reaction (2E,6E)-farnesyl diphosphate = (Z)-beta-farnesene + diphosphate. The catalysed reaction is (2Z,6Z)-farnesyl diphosphate = beta-acoradiene + diphosphate. The enzyme catalyses (2Z,6Z)-farnesyl diphosphate = alpha-acoradiene + diphosphate. It carries out the reaction (2Z,6Z)-farnesyl diphosphate = beta-bisabolene + diphosphate. It catalyses the reaction (2E,6E)-farnesyl diphosphate = (-)-alpha-cedrene + diphosphate. The catalysed reaction is (2E,6E)-farnesyl diphosphate = beta-bisabolene + diphosphate. The enzyme catalyses (2E,6E)-farnesyl diphosphate = beta-acoradiene + diphosphate. It carries out the reaction (2Z,6Z)-farnesyl diphosphate = (-)-alpha-cedrene + diphosphate. It catalyses the reaction (2E)-geranyl diphosphate = terpinolene + diphosphate. The catalysed reaction is (2E)-geranyl diphosphate = limonene + diphosphate. The enzyme catalyses (2E)-geranyl diphosphate = beta-myrcene + diphosphate. It functions in the pathway secondary metabolite biosynthesis; terpenoid biosynthesis. Sesquiterpene synthase involved in the biosynthesis of volatile compounds. Mediates the conversion of (2E,6E)-farnesyl diphosphate ((EE)-FPP) into (+)-thujopsene, beta-bisabolene, alpha-cederene, beta-acoradiene, (E)-gamma-bisabolene, (Z)-alpha-bisabolene, (Z)-beta-farnesene and (E)-beta-farnesene, and of (2Z,6Z)-farnesyl diphosphate ((ZZ)-FPP) into (E)-gamma-bisabolene, (E)-alpha-bisabolene, (E)-beta-farnesene, (Z)-beta-farnesene, beta-bisabolene, beta-acoradiene and alpha-acoradiene. Can act with a low efficiency as a monoterpene synthase with geranyl diphosphate (GPP) as substrate, thus producing beta-myrcene, limonene and terpinolene. In Solanum habrochaites (Wild tomato), this protein is Sesquiterpene synthase 14b.